Here is a 184-residue protein sequence, read N- to C-terminus: uncharacterized protein (184 aa).

The first 20 residues, 1–20, serve as a signal peptide directing secretion; sequence MYQLEKIWVLLCLALVGVLG.

This is an uncharacterized protein from Drosophila melanogaster (Fruit fly).